The following is a 279-amino-acid chain: uncharacterized protein (279 aa).

The span at 1–29 (MSSRYTSSYTPSSRYGSGWDYSSSYSSSR) shows a compositional bias: low complexity. 2 disordered regions span residues 1 to 111 (MSSR…APRE) and 137 to 233 (LTLA…AEAL). The span at 30–44 (TSRDRDTGSYRDRDY) shows a compositional bias: basic and acidic residues. Low complexity predominate over residues 45-59 (SSTSYTSTRPRYSTY). Residues 142 to 153 (EPEESEEEEDDE) show a composition bias toward acidic residues. A compositionally biased stretch (low complexity) spans 170–186 (ESSPVSSPVKEVSSAAS). A compositionally biased stretch (polar residues) spans 189 to 205 (ANDNGNETENRTPSPTV). The span at 221 to 233 (SDVKKEGGDAEAL) shows a compositional bias: basic and acidic residues.

This is an uncharacterized protein from Caenorhabditis elegans.